Reading from the N-terminus, the 62-residue chain is Large ribosomal subunit protein uL29 (62 aa).

It belongs to the universal ribosomal protein uL29 family.

This chain is Large ribosomal subunit protein uL29, found in Syntrophotalea carbinolica (strain DSM 2380 / NBRC 103641 / GraBd1) (Pelobacter carbinolicus).